A 461-amino-acid chain; its full sequence is MRLFTYPTPDLIHIKLKVKIRIHPPLHISSTAGFDIIAYLLQIVQTAFKPLQMPSEIIGIRLCKGYFMSLHSDILVVGAGPAGLSFAAELAGSGLKVTLIERSPLTVLQNPPYDGREIALTHFSREIMQRLGMWDKIPENEIYPLRDAKVLNGRSDYQLHFPQPTEARGEPADCLGYLISNHNIRRAAYEVVSQLDNVSILTDTVVKEVKTSDNEAQVILENGKILTARLLLAADSRFSQTRRQLGISSDMHDYSRTMFVCRMKHTLSNQHTAYECFHYGRTIALLPLEEHLTNTVITVDTDKINSVQNLSPEELAASVKEQLKGRLGDMELVSSIHHYPLVGMIAKRFYGKRSALIGDAAVGMHPVTAHGFNLGLSSADILAKLILEAEQRGQDIGASSLLEKYSNKHMLHAHPLYHGTNMMLKLFTNETAPAKLLRGLVLRAGNNFPPLKKLITKQLTG.

It belongs to the UbiH/COQ6 family. It depends on FAD as a cofactor.

The catalysed reaction is a 2-(all-trans-polyprenyl)phenol + NADPH + O2 + H(+) = a 3-(all-trans-polyprenyl)benzene-1,2-diol + NADP(+) + H2O. It catalyses the reaction a 5-methoxy-2-methyl-3-(all-trans-polyprenyl)benzene-1,4-diol + AH2 + O2 = a 3-demethylubiquinol + A + H2O. It participates in cofactor biosynthesis; ubiquinone biosynthesis. Its function is as follows. Catalyzes the hydroxylation of three positions of the aromatic ring during ubiquinone biosynthesis. In Neisseria meningitidis serogroup C / serotype 2a (strain ATCC 700532 / DSM 15464 / FAM18), this protein is Ubiquinone hydroxylase UbiM.